Consider the following 243-residue polypeptide: Adenosylcobinamide-GDP ribazoletransferase (243 aa).

5 consecutive transmembrane segments (helical) span residues 31-51, 55-75, 109-129, 133-153, and 188-208; these read LLFY…FNTL, APLM…SGGL, IAVV…LALI, ASVW…GLFL, and VLLA…CFFW.

This sequence belongs to the CobS family. Mg(2+) serves as cofactor.

It is found in the cell inner membrane. The catalysed reaction is alpha-ribazole + adenosylcob(III)inamide-GDP = adenosylcob(III)alamin + GMP + H(+). It carries out the reaction alpha-ribazole 5'-phosphate + adenosylcob(III)inamide-GDP = adenosylcob(III)alamin 5'-phosphate + GMP + H(+). It functions in the pathway cofactor biosynthesis; adenosylcobalamin biosynthesis; adenosylcobalamin from cob(II)yrinate a,c-diamide: step 7/7. In terms of biological role, joins adenosylcobinamide-GDP and alpha-ribazole to generate adenosylcobalamin (Ado-cobalamin). Also synthesizes adenosylcobalamin 5'-phosphate from adenosylcobinamide-GDP and alpha-ribazole 5'-phosphate. In Pseudomonas syringae pv. syringae (strain B728a), this protein is Adenosylcobinamide-GDP ribazoletransferase.